Here is a 235-residue protein sequence, read N- to C-terminus: Small ribosomal subunit protein uS2 (235 aa).

The protein belongs to the universal ribosomal protein uS2 family.

The polypeptide is Small ribosomal subunit protein uS2 (rpsB) (Geobacillus stearothermophilus (Bacillus stearothermophilus)).